Consider the following 248-residue polypeptide: 2,3-bisphosphoglycerate-dependent phosphoglycerate mutase (248 aa).

Substrate is bound by residues 8–15, 21–22, Arg60, 87–90, Lys98, 114–115, and 183–184; these read RHGESTWN, TG, ERHY, RR, and GN. Catalysis depends on His9, which acts as the Tele-phosphohistidine intermediate. Residue Glu87 is the Proton donor/acceptor of the active site.

It belongs to the phosphoglycerate mutase family. BPG-dependent PGAM subfamily. As to quaternary structure, homodimer.

It carries out the reaction (2R)-2-phosphoglycerate = (2R)-3-phosphoglycerate. It functions in the pathway carbohydrate degradation; glycolysis; pyruvate from D-glyceraldehyde 3-phosphate: step 3/5. Catalyzes the interconversion of 2-phosphoglycerate and 3-phosphoglycerate. This chain is 2,3-bisphosphoglycerate-dependent phosphoglycerate mutase, found in Burkholderia lata (strain ATCC 17760 / DSM 23089 / LMG 22485 / NCIMB 9086 / R18194 / 383).